Consider the following 478-residue polypeptide: Chromosomal replication initiator protein DnaA (478 aa).

The segment at 1–71 (MKEFWQTCVS…EALAAEWFQR (71 aa)) is domain I, interacts with DnaA modulators. Positions 71–140 (RPVQVAFELP…DAAGVVYERS (70 aa)) are domain II. A domain III, AAA+ region region spans residues 141–357 (RLNTDLTFDN…GALRKVLAYA (217 aa)). ATP is bound by residues G185, G187, K188, and T189. A domain IV, binds dsDNA region spans residues 358–478 (RFHGRDVLSV…LHVLEQTLKG (121 aa)).

It belongs to the DnaA family. As to quaternary structure, oligomerizes as a right-handed, spiral filament on DNA at oriC.

Its subcellular location is the cytoplasm. In terms of biological role, plays an essential role in the initiation and regulation of chromosomal replication. ATP-DnaA binds to the origin of replication (oriC) to initiate formation of the DNA replication initiation complex once per cell cycle. Binds the DnaA box (a 9 base pair repeat at the origin) and separates the double-stranded (ds)DNA. Forms a right-handed helical filament on oriC DNA; dsDNA binds to the exterior of the filament while single-stranded (ss)DNA is stabiized in the filament's interior. The ATP-DnaA-oriC complex binds and stabilizes one strand of the AT-rich DNA unwinding element (DUE), permitting loading of DNA polymerase. After initiation quickly degrades to an ADP-DnaA complex that is not apt for DNA replication. Binds acidic phospholipids. The polypeptide is Chromosomal replication initiator protein DnaA (Bordetella petrii (strain ATCC BAA-461 / DSM 12804 / CCUG 43448)).